Here is a 467-residue protein sequence, read N- to C-terminus: Chromosomal replication initiator protein DnaA (467 aa).

The interval 1–74 (MSADVWSQGC…ESVLSDLAGK (74 aa)) is domain I, interacts with DnaA modulators. The interval 74 to 130 (KPVRLDLQLAAREAPPRPSSDAPRSNGHPQAAGQWLGAPSSSNAGAYTQASAPTPTH) is domain II. Residues 85-127 (REAPPRPSSDAPRSNGHPQAAGQWLGAPSSSNAGAYTQASAPT) form a disordered region. The span at 112-127 (PSSSNAGAYTQASAPT) shows a compositional bias: polar residues. The segment at 131 to 347 (RLNTALTFDT…GALRKVLAYA (217 aa)) is domain III, AAA+ region. ATP contacts are provided by Gly175, Gly177, Lys178, and Thr179. Positions 348–467 (RFSQKDINIA…LHVLEQTLKG (120 aa)) are domain IV, binds dsDNA.

Belongs to the DnaA family. As to quaternary structure, oligomerizes as a right-handed, spiral filament on DNA at oriC.

The protein localises to the cytoplasm. Its function is as follows. Plays an essential role in the initiation and regulation of chromosomal replication. ATP-DnaA binds to the origin of replication (oriC) to initiate formation of the DNA replication initiation complex once per cell cycle. Binds the DnaA box (a 9 base pair repeat at the origin) and separates the double-stranded (ds)DNA. Forms a right-handed helical filament on oriC DNA; dsDNA binds to the exterior of the filament while single-stranded (ss)DNA is stabiized in the filament's interior. The ATP-DnaA-oriC complex binds and stabilizes one strand of the AT-rich DNA unwinding element (DUE), permitting loading of DNA polymerase. After initiation quickly degrades to an ADP-DnaA complex that is not apt for DNA replication. Binds acidic phospholipids. This Methylibium petroleiphilum (strain ATCC BAA-1232 / LMG 22953 / PM1) protein is Chromosomal replication initiator protein DnaA.